A 120-amino-acid chain; its full sequence is UPF0344 protein LMOf2365_2298 (120 aa).

The next 4 membrane-spanning stretches (helical) occupy residues 3–23, 33–53, 62–82, and 92–112; these read GYIHLISWVAIVVLTVTALLI, MLQMINRVFYILVILSGIMMV, ILAIFKILMGIIVIGVVEMLL, and GMFLMIFVIVVVITISLGFYL.

Belongs to the UPF0344 family.

The protein localises to the cell membrane. The polypeptide is UPF0344 protein LMOf2365_2298 (Listeria monocytogenes serotype 4b (strain F2365)).